A 34-amino-acid polypeptide reads, in one-letter code: Mu-theraphotoxin-CCy1a (34 aa).

3 disulfides stabilise this stretch: cysteine 3–cysteine 18, cysteine 10–cysteine 23, and cysteine 17–cysteine 30.

This sequence belongs to the neurotoxin 10 (Hwtx-1) family. 14 (Hntx-1) subfamily. Expressed by the venom gland.

The protein resides in the secreted. In terms of biological role, voltage-gated sodium channel Nav1.7/SCN9A inhibitor. The chain is Mu-theraphotoxin-CCy1a from Chromatopelma cyaneopubescens (Greenbottle blue tarantula).